Reading from the N-terminus, the 1303-residue chain is MTVVPGETQCEEAQPAANGSSSPVLLQPFRRPRTDSRSRLDSGSNNTTLSEDCARKSILRTLKSLGVEIDESASFEAIIDSGGIEKLADFWRKRDSSSEIAFQGLLSVLEYCLQHSFDTNEFFEKFVNALGYHTVQFWRAGVPYVFDSDMSHGTKYRDALLFSLTLYDVNTGKSRLKELYAAVPGIRKSLLGVHAKRFGEQYHHLQRRRSVSSRGGSLRGSMDSLNDSGQNGAEDVIGVEDEEEAQKFRGKRTSISLDPAAAGEVMFTIEDGACFPSGGLANTHFQQRVINVSNAPPVSLKREKSGEWEIKQGSGGLVSCVDPIMSVNQENMWLANLGMNIDKKKMLRYDDCLRSQEHTLENMRSTELLNVTDDSAPLAPATNTLGLPLMRQALADVLFHVIADDDIKEQNEDEQSRNVREEMSLLGVLNQYNRSNYKLNPVVVQEQDYNVYYGGISNGLLWPALHNLPEYIVADYDDPKVLYEHWCAYVRVNYQFAIDAVRNSRPQDFIWIHDYHLMLTGMIMQSLDSSLEIGFFLHIPFLPPDNFFTKYRLCAFPIMRGLLRFTKVGFQTHRDRAKFVELVGIHLPTARVTYDEKMDIHTVTYQGWSCSLGVFPVSIKNEDFLKVAQSAETIKKADDIRKEILGETPVDSARLLFSVERFDYTKGIKEKLLAYRRYFERHPDRIGKDVLYQVAVTNRRSVDTYRMYQDECIQMAEDINKEFATDEYPNWKPLIFRTDGLQRADLVAHYLAMDVGVVTPKKDGMNLVAKEMLVCNPSAGLVLSTGAGSEIQFTMAGLHPDDGDKCYHRVVDVYDADHYADAFYEAAVEPEAERAAHGQRLNEFIMNNDIERWSTAFLDPGWSHLVIRQSEIKDLDDFYSLMMRTRDVRRQIVERVLKGIPIRSHFSISLSNAKESLLLACQPGTRTLHLKPSLEEDEQTEPAHFDIANELDEFEKDLNFMKFIQSDDVYNVEQFINSLQEYHPVSADKFRDEVIELGDMLTEADHFNFFFTDRDGTLKSYSCSYPASIQPAYSGVIQAQFARRCAQTCAIVTTAPLMRIGVLDVSTIPEGYYYFGASAGREWFIDPANKFKDQSIPEEDLELLERVFAAISDLLEEPKFKHFTWVGSGLQKHYGHITIAHQDAFNSVPRHQVRAIDQKIKDIIHRIDPDQHTLKVKETETDIKIFLKSESGEIFDKGQGIRLLVEHMKCDISNGTILVCGDSSTDLPMLQACLEANPSGVYTVWVTRSDELKTTVRELCERFGNKNFVFVSCPEVLLGGMAQATIREISIGRPGPRASHDSE.

2 disordered regions span residues 1–48 and 205–251; these read MTVV…NNTT and LQRR…FRGK. Residues 212-221 show a composition bias toward low complexity; it reads SSRGGSLRGS.

It in the N-terminal section; belongs to the glycosyltransferase 20 family. In the C-terminal section; belongs to the gob-1 trehalose phosphatase family.

The catalysed reaction is D-glucose 6-phosphate + UDP-alpha-D-glucose = alpha,alpha-trehalose 6-phosphate + UDP + H(+). Catalyzes the production of trehalose from glucose-6-phosphate and UDP-alpha-D-glucose in a 2 step process. The sequence is that of Alpha,alpha-trehalose-phosphate synthase [UDP-forming] 2 (tps-2) from Aphelenchoides avenae (Mycophagous nematode worm).